Reading from the N-terminus, the 188-residue chain is Putative manganese efflux pump MntP (188 aa).

The next 6 helical transmembrane spans lie at 3 to 23 (LSATILLAFGMSMDAFAASIG), 41 to 61 (LIFGAIETLTPLVGWGLGMLA), 62 to 82 (SQFILEWNHWIAFILLVFLGG), 107 to 129 (LLVTTAFATSLDAMAVGVGLAFL), 143 to 163 (ATFIMSTLGMMVGRFIGPLLG), and 168 to 188 (ILGGIVLIGIGSEILWSHFAG).

This sequence belongs to the MntP (TC 9.B.29) family.

The protein resides in the cell inner membrane. In terms of biological role, probably functions as a manganese efflux pump. In Klebsiella pneumoniae subsp. pneumoniae (strain ATCC 700721 / MGH 78578), this protein is Putative manganese efflux pump MntP.